A 241-amino-acid polypeptide reads, in one-letter code: ATP synthase subunit a (241 aa).

Helical transmembrane passes span 30-50 (GQVFMTSWIVIGAILALVVVG), 91-111 (FIGTLFLFIFVSNWGGSLVPW), 128-148 (INTTVALALLVSLSYFYAGLS), 193-213 (LVVAVLVFLVPLFLPVPVMFL), and 214-234 (GLFTSAIQALIFATLAAYYIG).

Belongs to the ATPase A chain family. As to quaternary structure, F-type ATPases have 2 components, CF(1) - the catalytic core - and CF(0) - the membrane proton channel. CF(1) has five subunits: alpha(3), beta(3), gamma(1), delta(1), epsilon(1). CF(0) has four main subunits: a, b, b' and c.

It is found in the cellular thylakoid membrane. Its function is as follows. Key component of the proton channel; it plays a direct role in the translocation of protons across the membrane. The chain is ATP synthase subunit a from Prochlorococcus marinus (strain MIT 9313).